Here is a 152-residue protein sequence, read N- to C-terminus: Ribonuclease H (152 aa).

Residues 6–147 form the RNase H type-1 domain; that stretch reads KKNRVIAYTD…ADELANKAIA (142 aa). Residues Asp15, Glu53, Asp75, and Asp139 each coordinate Mg(2+).

The protein belongs to the RNase H family. In terms of assembly, monomer. Mg(2+) is required as a cofactor.

Its subcellular location is the cytoplasm. It carries out the reaction Endonucleolytic cleavage to 5'-phosphomonoester.. Endonuclease that specifically degrades the RNA of RNA-DNA hybrids. This Francisella tularensis subsp. tularensis (strain FSC 198) protein is Ribonuclease H.